The following is a 197-amino-acid chain: HTH-type transcriptional regulator BetI (197 aa).

Residues Pro-8–Leu-68 form the HTH tetR-type domain. The segment at residues Ser-31–Phe-50 is a DNA-binding region (H-T-H motif).

It participates in amine and polyamine biosynthesis; betaine biosynthesis via choline pathway [regulation]. Its function is as follows. Repressor involved in the biosynthesis of the osmoprotectant glycine betaine. It represses transcription of the choline transporter BetT and the genes of BetAB involved in the synthesis of glycine betaine. The protein is HTH-type transcriptional regulator BetI of Pseudomonas fluorescens (strain SBW25).